The following is a 597-amino-acid chain: Scarecrow-like protein 5 (597 aa).

Residues 111–172 (ESSSGTKSHP…SPLSGSSATN (62 aa)) are disordered. The segment covering 123–169 (NNKNNSSSTTSFSSNESPISQANNNNLSRFNNHSPEENNNSPLSGSS) has biased composition (low complexity). A GRAS domain is found at 218–597 (SMEMISRGDL…QPLITSCAWR (380 aa)). The interval 225 to 285 (GDLKGVLYEC…VARLASSGSS (61 aa)) is leucine repeat I (LRI). Residues 304–369 (MHILYEACPY…GGPPNVRITG (66 aa)) form a VHIID region. Residues 335–339 (VHIID) carry the VHIID motif. The segment at 385-417 (LVGQRLGKLAEMCGVPFEFHGAALCCTEVEIEK) is leucine repeat II (LRII). Residues 426–520 (LAVNFPLVLH…QHCLAREVVN (95 aa)) are PFYRE. The interval 523–597 (ACEGVEREER…QPLITSCAWR (75 aa)) is SAW.

Belongs to the GRAS family. In terms of tissue distribution, expressed in seedlings, roots, shoots, leaves, flowers and siliques.

It localises to the nucleus. Probable transcription factor involved in plant development. The sequence is that of Scarecrow-like protein 5 (SCL5) from Arabidopsis thaliana (Mouse-ear cress).